Reading from the N-terminus, the 469-residue chain is UDP-N-acetylmuramate--L-alanine ligase (469 aa).

118–124 (GTHGKTT) contacts ATP.

This sequence belongs to the MurCDEF family.

It is found in the cytoplasm. The catalysed reaction is UDP-N-acetyl-alpha-D-muramate + L-alanine + ATP = UDP-N-acetyl-alpha-D-muramoyl-L-alanine + ADP + phosphate + H(+). It functions in the pathway cell wall biogenesis; peptidoglycan biosynthesis. In terms of biological role, cell wall formation. The sequence is that of UDP-N-acetylmuramate--L-alanine ligase from Ruegeria sp. (strain TM1040) (Silicibacter sp.).